Here is a 444-residue protein sequence, read N- to C-terminus: UDP-N-acetylglucosamine 1-carboxyvinyltransferase (444 aa).

22–23 (KN) lines the phosphoenolpyruvate pocket. Arginine 94 provides a ligand contact to UDP-N-acetyl-alpha-D-glucosamine. Aspartate 119 acts as the Proton donor in catalysis. UDP-N-acetyl-alpha-D-glucosamine is bound by residues aspartate 309 and valine 331.

The protein belongs to the EPSP synthase family. MurA subfamily.

The protein localises to the cytoplasm. The enzyme catalyses phosphoenolpyruvate + UDP-N-acetyl-alpha-D-glucosamine = UDP-N-acetyl-3-O-(1-carboxyvinyl)-alpha-D-glucosamine + phosphate. It functions in the pathway cell wall biogenesis; peptidoglycan biosynthesis. Functionally, cell wall formation. Adds enolpyruvyl to UDP-N-acetylglucosamine. This is UDP-N-acetylglucosamine 1-carboxyvinyltransferase from Chlamydia trachomatis serovar A (strain ATCC VR-571B / DSM 19440 / HAR-13).